Here is a 171-residue protein sequence, read N- to C-terminus: S-ribosylhomocysteine lyase (171 aa).

3 residues coordinate Fe cation: His-54, His-58, and Cys-128.

Belongs to the LuxS family. Homodimer. Fe cation is required as a cofactor.

It catalyses the reaction S-(5-deoxy-D-ribos-5-yl)-L-homocysteine = (S)-4,5-dihydroxypentane-2,3-dione + L-homocysteine. Involved in the synthesis of autoinducer 2 (AI-2) which is secreted by bacteria and is used to communicate both the cell density and the metabolic potential of the environment. The regulation of gene expression in response to changes in cell density is called quorum sensing. Catalyzes the transformation of S-ribosylhomocysteine (RHC) to homocysteine (HC) and 4,5-dihydroxy-2,3-pentadione (DPD). This chain is S-ribosylhomocysteine lyase, found in Yersinia pseudotuberculosis serotype O:1b (strain IP 31758).